The chain runs to 162 residues: MKIAIYPGTFDPVTNGHYDLIKRAACMFEKLVIGVAESPSKATLFSLDERVALLRETCYELPNVSVEGFSGLLVDFATEQNASILVRGLRTTMDFEYEFGLTTMYRRLKPELESLFLTPSEEFAFLSSTLVREVAIHGGEIEQFVPGCVHQAVVAKVKAFKN.

A substrate-binding site is contributed by T9. ATP-binding positions include 9-10 (TF) and H17. K41, L73, and R87 together coordinate substrate. Residues 88–90 (GLR), E98, and 123–129 (FAFLSST) each bind ATP.

This sequence belongs to the bacterial CoaD family. As to quaternary structure, homohexamer. Mg(2+) serves as cofactor.

The protein resides in the cytoplasm. It catalyses the reaction (R)-4'-phosphopantetheine + ATP + H(+) = 3'-dephospho-CoA + diphosphate. Its pathway is cofactor biosynthesis; coenzyme A biosynthesis; CoA from (R)-pantothenate: step 4/5. In terms of biological role, reversibly transfers an adenylyl group from ATP to 4'-phosphopantetheine, yielding dephospho-CoA (dPCoA) and pyrophosphate. The sequence is that of Phosphopantetheine adenylyltransferase from Vibrio atlanticus (strain LGP32) (Vibrio splendidus (strain Mel32)).